The sequence spans 314 residues: Porphobilinogen deaminase (314 aa).

The residue at position 241 (Cys-241) is an S-(dipyrrolylmethanemethyl)cysteine.

Belongs to the HMBS family. Monomer. It depends on dipyrromethane as a cofactor.

It catalyses the reaction 4 porphobilinogen + H2O = hydroxymethylbilane + 4 NH4(+). It participates in porphyrin-containing compound metabolism; protoporphyrin-IX biosynthesis; coproporphyrinogen-III from 5-aminolevulinate: step 2/4. Its pathway is porphyrin-containing compound metabolism; chlorophyll biosynthesis. Functionally, tetrapolymerization of the monopyrrole PBG into the hydroxymethylbilane pre-uroporphyrinogen in several discrete steps. The chain is Porphobilinogen deaminase from Chloroherpeton thalassium (strain ATCC 35110 / GB-78).